The primary structure comprises 147 residues: Sec-independent protein translocase protein TatB (147 aa).

The chain crosses the membrane as a helical span at residues 1 to 21 (MFDISFSEILVIAAVALIVIG). Over residues 67–88 (EETGRSIENSVHTELDKFRETV) the composition is skewed to basic and acidic residues. Residues 67-147 (EETGRSIENS…GVNRERETAE (81 aa)) are disordered. The span at 103–117 (APAGESSPPQNSSPA) shows a compositional bias: low complexity.

The protein belongs to the TatB family. The Tat system comprises two distinct complexes: a TatABC complex, containing multiple copies of TatA, TatB and TatC subunits, and a separate TatA complex, containing only TatA subunits. Substrates initially bind to the TatABC complex, which probably triggers association of the separate TatA complex to form the active translocon.

Its subcellular location is the cell inner membrane. Its function is as follows. Part of the twin-arginine translocation (Tat) system that transports large folded proteins containing a characteristic twin-arginine motif in their signal peptide across membranes. Together with TatC, TatB is part of a receptor directly interacting with Tat signal peptides. TatB may form an oligomeric binding site that transiently accommodates folded Tat precursor proteins before their translocation. The sequence is that of Sec-independent protein translocase protein TatB from Nitrosospira multiformis (strain ATCC 25196 / NCIMB 11849 / C 71).